We begin with the raw amino-acid sequence, 122 residues long: Large ribosomal subunit protein uL18 (122 aa).

The disordered stretch occupies residues 1 to 24; sequence MSTLSRKQQTQKRHRRLRRHLSGT. Positions 9–21 are enriched in basic residues; it reads QTQKRHRRLRRHL.

The protein belongs to the universal ribosomal protein uL18 family. As to quaternary structure, part of the 50S ribosomal subunit; part of the 5S rRNA/L5/L18/L25 subcomplex. Contacts the 5S and 23S rRNAs.

Its function is as follows. This is one of the proteins that bind and probably mediate the attachment of the 5S RNA into the large ribosomal subunit, where it forms part of the central protuberance. In Synechococcus sp. (strain WH7803), this protein is Large ribosomal subunit protein uL18.